The sequence spans 476 residues: Aspartyl/glutamyl-tRNA(Asn/Gln) amidotransferase subunit B (476 aa).

This sequence belongs to the GatB/GatE family. GatB subfamily. As to quaternary structure, heterotrimer of A, B and C subunits.

It carries out the reaction L-glutamyl-tRNA(Gln) + L-glutamine + ATP + H2O = L-glutaminyl-tRNA(Gln) + L-glutamate + ADP + phosphate + H(+). The enzyme catalyses L-aspartyl-tRNA(Asn) + L-glutamine + ATP + H2O = L-asparaginyl-tRNA(Asn) + L-glutamate + ADP + phosphate + 2 H(+). In terms of biological role, allows the formation of correctly charged Asn-tRNA(Asn) or Gln-tRNA(Gln) through the transamidation of misacylated Asp-tRNA(Asn) or Glu-tRNA(Gln) in organisms which lack either or both of asparaginyl-tRNA or glutaminyl-tRNA synthetases. The reaction takes place in the presence of glutamine and ATP through an activated phospho-Asp-tRNA(Asn) or phospho-Glu-tRNA(Gln). The protein is Aspartyl/glutamyl-tRNA(Asn/Gln) amidotransferase subunit B of Oleidesulfovibrio alaskensis (strain ATCC BAA-1058 / DSM 17464 / G20) (Desulfovibrio alaskensis).